The following is an 828-amino-acid chain: Periplasmic nitrate reductase (828 aa).

The segment at residues 1–31 (MKLSRRSFMKANAVAAAAAAAGLSVPGVARA) is a signal peptide (tat-type signal). Residues 39 to 95 (IKWDKAPCRFCGTGCGVLVGTQQGRVVACQGDPDAPVNRGLNCIKGYFLPKIMYGKD) form the 4Fe-4S Mo/W bis-MGD-type domain. Residues cysteine 46, cysteine 49, cysteine 53, and cysteine 81 each contribute to the [4Fe-4S] cluster site. Residues lysine 83, glutamine 150, asparagine 175, cysteine 179, 212–219 (WGSNMAEM), 243–247 (STFQH), 262–264 (QSD), methionine 372, glutamine 376, asparagine 482, 508–509 (SD), lysine 531, aspartate 558, and 718–727 (TGRVLEHWHT) contribute to the Mo-bis(molybdopterin guanine dinucleotide) site. Phenylalanine 794 serves as a coordination point for substrate. Positions 802 and 819 each coordinate Mo-bis(molybdopterin guanine dinucleotide).

Belongs to the prokaryotic molybdopterin-containing oxidoreductase family. NasA/NapA/NarB subfamily. As to quaternary structure, component of the periplasmic nitrate reductase NapAB complex composed of NapA and NapB. It depends on [4Fe-4S] cluster as a cofactor. Mo-bis(molybdopterin guanine dinucleotide) serves as cofactor. In terms of processing, predicted to be exported by the Tat system. The position of the signal peptide cleavage has not been experimentally proven.

It is found in the periplasm. It carries out the reaction 2 Fe(II)-[cytochrome] + nitrate + 2 H(+) = 2 Fe(III)-[cytochrome] + nitrite + H2O. Catalytic subunit of the periplasmic nitrate reductase complex NapAB. Receives electrons from NapB and catalyzes the reduction of nitrate to nitrite. This Salmonella schwarzengrund (strain CVM19633) protein is Periplasmic nitrate reductase.